We begin with the raw amino-acid sequence, 449 residues long: uncharacterized protein (449 aa).

Positions M1–P13 are enriched in basic residues. The interval M1 to L125 is disordered. S22 carries the phosphoserine modification. A compositionally biased stretch (polar residues) spans K73–G84. S156 carries the post-translational modification Phosphoserine.

The protein belongs to the bystin family.

This is an uncharacterized protein from Schizosaccharomyces pombe (strain 972 / ATCC 24843) (Fission yeast).